The sequence spans 405 residues: Cysteine desulfurase IscS (405 aa).

Residues 75 to 76 (AT), Asn156, Gln184, and 204 to 206 (SAH) each bind pyridoxal 5'-phosphate. At Lys207 the chain carries N6-(pyridoxal phosphate)lysine. Residue Thr244 participates in pyridoxal 5'-phosphate binding. Cys329 functions as the Cysteine persulfide intermediate in the catalytic mechanism. [2Fe-2S] cluster is bound at residue Cys329.

Belongs to the class-V pyridoxal-phosphate-dependent aminotransferase family. NifS/IscS subfamily. Homodimer. Forms a heterotetramer with IscU, interacts with other sulfur acceptors. Pyridoxal 5'-phosphate serves as cofactor.

Its subcellular location is the cytoplasm. The catalysed reaction is (sulfur carrier)-H + L-cysteine = (sulfur carrier)-SH + L-alanine. Its pathway is cofactor biosynthesis; iron-sulfur cluster biosynthesis. In terms of biological role, master enzyme that delivers sulfur to a number of partners involved in Fe-S cluster assembly, tRNA modification or cofactor biosynthesis. Catalyzes the removal of elemental sulfur atoms from cysteine to produce alanine. Functions as a sulfur delivery protein for Fe-S cluster synthesis onto IscU, an Fe-S scaffold assembly protein, as well as other S acceptor proteins. The protein is Cysteine desulfurase IscS of Acinetobacter baumannii (strain SDF).